The following is a 210-amino-acid chain: Chloramphenicol acetyltransferase (210 aa).

Histidine 79 is an active-site residue.

It belongs to the transferase hexapeptide repeat family.

The catalysed reaction is chloramphenicol + acetyl-CoA = chloramphenicol 3-acetate + CoA. In terms of biological role, this enzyme is an effector of chloramphenicol resistance in bacteria. In Klebsiella aerogenes (Enterobacter aerogenes), this protein is Chloramphenicol acetyltransferase (catB4).